The following is a 362-amino-acid chain: Phospho-N-acetylmuramoyl-pentapeptide-transferase (362 aa).

10 helical membrane-spanning segments follow: residues 28–48 (GATVTALLISFLFGPRIIALL), 73–93 (TPTMGGFLILVGLVPSVLLWA), 100–120 (VWIVLFVTLGFGAVGFADDYL), 134–154 (VKLFFEFVIALIAMWALVLVS), 169–189 (TLLIELGGFFFLFGALVIVGS), 201–221 (GLAIVPVMIAAASLGLIVYLV), 241–261 (LAVFCGALIGAGLGFLWYNAP), 264–284 (MVFMGDTGSLALGGALGAIAV), 290–310 (LVLAIIGGLFVLEAVSVIVQV), and 339–359 (TVVVRFWIISVVLAMAGLATL).

The protein belongs to the glycosyltransferase 4 family. MraY subfamily. Mg(2+) is required as a cofactor.

It is found in the cell inner membrane. It carries out the reaction UDP-N-acetyl-alpha-D-muramoyl-L-alanyl-gamma-D-glutamyl-meso-2,6-diaminopimeloyl-D-alanyl-D-alanine + di-trans,octa-cis-undecaprenyl phosphate = di-trans,octa-cis-undecaprenyl diphospho-N-acetyl-alpha-D-muramoyl-L-alanyl-D-glutamyl-meso-2,6-diaminopimeloyl-D-alanyl-D-alanine + UMP. The protein operates within cell wall biogenesis; peptidoglycan biosynthesis. Catalyzes the initial step of the lipid cycle reactions in the biosynthesis of the cell wall peptidoglycan: transfers peptidoglycan precursor phospho-MurNAc-pentapeptide from UDP-MurNAc-pentapeptide onto the lipid carrier undecaprenyl phosphate, yielding undecaprenyl-pyrophosphoryl-MurNAc-pentapeptide, known as lipid I. The protein is Phospho-N-acetylmuramoyl-pentapeptide-transferase of Parvibaculum lavamentivorans (strain DS-1 / DSM 13023 / NCIMB 13966).